The chain runs to 805 residues: G-type lectin S-receptor-like serine/threonine-protein kinase SD1-29 (805 aa).

An N-terminal signal peptide occupies residues 1 to 21 (MGMVLFACLLLLIIFPTCGYA). The Bulb-type lectin domain occupies 22 to 141 (AINTSSPLSI…VSGNKLWQSF (120 aa)). Residues 22 to 428 (AINTSSPLSI…SELAGSSRRK (407 aa)) lie on the Extracellular side of the membrane. 5 N-linked (GlcNAc...) asparagine glycosylation sites follow: asparagine 24, asparagine 50, asparagine 85, asparagine 91, and asparagine 248. The 37-residue stretch at 277–313 (PENPCDLYGRCGPYGLCVRSDPPKCECLKGFVPKSDE) folds into the EGF-like domain. Intrachain disulfides connect cysteine 281-cysteine 293 and cysteine 287-cysteine 301. N-linked (GlcNAc...) asparagine glycosylation is found at asparagine 319 and asparagine 378. The region spanning 332–418 (CQAKSSMKTQ…GEFLFIRLAS (87 aa)) is the PAN domain. 2 disulfide bridges follow: cysteine 371-cysteine 392 and cysteine 375-cysteine 381. The helical transmembrane segment at 429 to 449 (IIVGTTVSLSIFLILVFAAIM) threads the bilayer. The Cytoplasmic portion of the chain corresponds to 450–805 (LWRYRAKQND…EMTESMIQGR (356 aa)). The Protein kinase domain occupies 488–773 (FSPSNKLGQG…DLPVPKQPIF (286 aa)). ATP-binding positions include 494 to 502 (LGQGGFGPV) and lysine 516. Serine 522 and serine 537 each carry phosphoserine. The caM-binding stretch occupies residues 577 to 594 (CLKFELDWPKRFNIIQGI). The residue at position 600 (tyrosine 600) is a Phosphotyrosine. The active-site Proton acceptor is aspartate 613. 2 positions are modified to phosphoserine: serine 617 and serine 630. Position 647 is a phosphothreonine (threonine 647). Serine 690 and serine 793 each carry phosphoserine.

This sequence belongs to the protein kinase superfamily. Ser/Thr protein kinase family. Interacts with PUB9, PUB13, PUB14, PUB29, PUB38, PUB44 and PUB45. Interacts with PBL34, PBL35 and PBL36. In terms of processing, autophosphorylated at Tyr-600. Autophosphorylation at Tyr-600 is required for downstream phosphorylation of the receptor-like cytoplasmic kinase PBL34, PBL35 and PBL36, and activation of plant immunity.

Its subcellular location is the cell membrane. It carries out the reaction L-seryl-[protein] + ATP = O-phospho-L-seryl-[protein] + ADP + H(+). The enzyme catalyses L-threonyl-[protein] + ATP = O-phospho-L-threonyl-[protein] + ADP + H(+). It catalyses the reaction L-tyrosyl-[protein] + ATP = O-phospho-L-tyrosyl-[protein] + ADP + H(+). S-domain receptor protein kinase involved in lipopolysaccharide (LPS) sensing. Specifically detects LPS of Pseudomonas and Xanthomonas species. LPS are major components of the outer membrane of Gram-negative bacteria and are important microbe-associated molecular patterns (MAMPs) that trigger biphasic production of reactive oxygen species (ROS) and immune responses in plants. Seems to be only partially associated with the second LPS-triggered ROS burst. Mediates defense signaling in response to the medium-chain 3-hydroxy fatty acid 3-OH-C10:0, a pathogen-associated molecular pattern (PAMP) which induces autophosphorylation at Tyr-600. Autophosphorylation at Tyr-600 is required for downstream phosphorylation of the receptor-like cytoplasmic kinase PBL34, PBL35 and PBL36, and activation of plant immunity. Its function is as follows. (Microbial infection) Targeted by the bacterial type III effector protein tyrosine phosphatase HopAO1 from Pseudomonas syringae. HopAO1 dephosphorylates Tyr-600, which suppresses the immune response. The chain is G-type lectin S-receptor-like serine/threonine-protein kinase SD1-29 from Arabidopsis thaliana (Mouse-ear cress).